A 643-amino-acid polypeptide reads, in one-letter code: Threonine--tRNA ligase (643 aa).

The TGS domain occupies 1 to 61 (MPIITLPDGS…EQDATLEIIT (61 aa)). A catalytic region spans residues 243-534 (DHRKIGKALD…ITEEYAGFFP (292 aa)). Residues Cys334, His385, and His511 each contribute to the Zn(2+) site.

It belongs to the class-II aminoacyl-tRNA synthetase family. Homodimer. Zn(2+) is required as a cofactor.

It is found in the cytoplasm. The catalysed reaction is tRNA(Thr) + L-threonine + ATP = L-threonyl-tRNA(Thr) + AMP + diphosphate + H(+). Functionally, catalyzes the attachment of threonine to tRNA(Thr) in a two-step reaction: L-threonine is first activated by ATP to form Thr-AMP and then transferred to the acceptor end of tRNA(Thr). Also edits incorrectly charged L-seryl-tRNA(Thr). This chain is Threonine--tRNA ligase, found in Haemophilus influenzae (strain ATCC 51907 / DSM 11121 / KW20 / Rd).